Reading from the N-terminus, the 408-residue chain is Succinylornithine transaminase (408 aa).

N6-(pyridoxal phosphate)lysine is present on Lys-252.

Belongs to the class-III pyridoxal-phosphate-dependent aminotransferase family. AstC subfamily. It depends on pyridoxal 5'-phosphate as a cofactor.

It carries out the reaction N(2)-succinyl-L-ornithine + 2-oxoglutarate = N-succinyl-L-glutamate 5-semialdehyde + L-glutamate. The protein operates within amino-acid degradation; L-arginine degradation via AST pathway; L-glutamate and succinate from L-arginine: step 3/5. Its function is as follows. Catalyzes the transamination of N(2)-succinylornithine and alpha-ketoglutarate into N(2)-succinylglutamate semialdehyde and glutamate. Can also act as an acetylornithine aminotransferase. In Salmonella newport (strain SL254), this protein is Succinylornithine transaminase.